The chain runs to 277 residues: Tryptophan synthase alpha chain (277 aa).

Active-site proton acceptor residues include Glu-42 and Glu-53.

The protein belongs to the TrpA family. Tetramer of two alpha and two beta chains.

It catalyses the reaction (1S,2R)-1-C-(indol-3-yl)glycerol 3-phosphate + L-serine = D-glyceraldehyde 3-phosphate + L-tryptophan + H2O. Its pathway is amino-acid biosynthesis; L-tryptophan biosynthesis; L-tryptophan from chorismate: step 5/5. Its function is as follows. The alpha subunit is responsible for the aldol cleavage of indoleglycerol phosphate to indole and glyceraldehyde 3-phosphate. The protein is Tryptophan synthase alpha chain of Natronomonas pharaonis (strain ATCC 35678 / DSM 2160 / CIP 103997 / JCM 8858 / NBRC 14720 / NCIMB 2260 / Gabara) (Halobacterium pharaonis).